We begin with the raw amino-acid sequence, 473 residues long: L-seryl-tRNA(Sec) selenium transferase (473 aa).

Position 302 is an N6-(pyridoxal phosphate)lysine (K302).

The protein belongs to the SelA family. Pyridoxal 5'-phosphate is required as a cofactor.

It is found in the cytoplasm. The catalysed reaction is L-seryl-tRNA(Sec) + selenophosphate + H(+) = L-selenocysteinyl-tRNA(Sec) + phosphate. It functions in the pathway aminoacyl-tRNA biosynthesis; selenocysteinyl-tRNA(Sec) biosynthesis; selenocysteinyl-tRNA(Sec) from L-seryl-tRNA(Sec) (bacterial route): step 1/1. Its function is as follows. Converts seryl-tRNA(Sec) to selenocysteinyl-tRNA(Sec) required for selenoprotein biosynthesis. This is L-seryl-tRNA(Sec) selenium transferase from Shewanella oneidensis (strain ATCC 700550 / JCM 31522 / CIP 106686 / LMG 19005 / NCIMB 14063 / MR-1).